Reading from the N-terminus, the 94-residue chain is Pyrimidine/purine nucleoside phosphorylase (94 aa).

This sequence belongs to the nucleoside phosphorylase PpnP family.

It carries out the reaction a purine D-ribonucleoside + phosphate = a purine nucleobase + alpha-D-ribose 1-phosphate. The catalysed reaction is adenosine + phosphate = alpha-D-ribose 1-phosphate + adenine. It catalyses the reaction cytidine + phosphate = cytosine + alpha-D-ribose 1-phosphate. The enzyme catalyses guanosine + phosphate = alpha-D-ribose 1-phosphate + guanine. It carries out the reaction inosine + phosphate = alpha-D-ribose 1-phosphate + hypoxanthine. The catalysed reaction is thymidine + phosphate = 2-deoxy-alpha-D-ribose 1-phosphate + thymine. It catalyses the reaction uridine + phosphate = alpha-D-ribose 1-phosphate + uracil. The enzyme catalyses xanthosine + phosphate = alpha-D-ribose 1-phosphate + xanthine. In terms of biological role, catalyzes the phosphorolysis of diverse nucleosides, yielding D-ribose 1-phosphate and the respective free bases. Can use uridine, adenosine, guanosine, cytidine, thymidine, inosine and xanthosine as substrates. Also catalyzes the reverse reactions. The chain is Pyrimidine/purine nucleoside phosphorylase from Pseudomonas putida (strain W619).